The chain runs to 510 residues: Zinc metalloproteinase (510 aa).

Residues Met-1–Ala-24 form the signal peptide. Positions Asp-25–Glu-200 are excised as a propeptide. His-349 contributes to the Zn(2+) binding site. Glu-350 is an active-site residue. Residues His-353 and Glu-373 each coordinate Zn(2+). His-437 functions as the Proton donor in the catalytic mechanism.

It belongs to the peptidase M4 family. It depends on Zn(2+) as a cofactor.

The protein localises to the secreted. In terms of biological role, probably linked to the pathogenesis of listerial infection. The sequence is that of Zinc metalloproteinase (mpl) from Listeria monocytogenes serovar 1/2a (strain ATCC BAA-679 / EGD-e).